We begin with the raw amino-acid sequence, 326 residues long: Ribosomal RNA small subunit methyltransferase H (326 aa).

S-adenosyl-L-methionine contacts are provided by residues Gly-35–Tyr-37, Asp-53, Phe-80, Asp-101, and Gln-108. The interval Glu-260–Arg-306 is disordered.

The protein belongs to the methyltransferase superfamily. RsmH family.

The protein localises to the cytoplasm. It catalyses the reaction cytidine(1402) in 16S rRNA + S-adenosyl-L-methionine = N(4)-methylcytidine(1402) in 16S rRNA + S-adenosyl-L-homocysteine + H(+). In terms of biological role, specifically methylates the N4 position of cytidine in position 1402 (C1402) of 16S rRNA. In Rhodospirillum rubrum (strain ATCC 11170 / ATH 1.1.1 / DSM 467 / LMG 4362 / NCIMB 8255 / S1), this protein is Ribosomal RNA small subunit methyltransferase H.